A 222-amino-acid chain; its full sequence is Peroxisomal membrane protein 11-4 (222 aa).

Over 1 to 81 the chain is Cytoplasmic; that stretch reads MSAGDTLDKL…LNGLRRAPGE (81 aa). The helical transmembrane segment at 82-102 threads the bilayer; the sequence is FGALAVLANAGEMVYFFFDHF. Over 103 to 196 the chain is Lumenal; it reads TWLSRVGVLD…IGIADIEPNP (94 aa). A helical transmembrane segment spans residues 197–217; the sequence is FCNHAVTLGISGLVSAWAGWY. Residues 218 to 222 lie on the Cytoplasmic side of the membrane; the sequence is RNWPS.

This sequence belongs to the peroxin-11 family. In terms of tissue distribution, expressed in seedlings, shoots, leaf sheaths and flag leaf.

The protein localises to the peroxisome membrane. Its function is as follows. Involved in peroxisomal proliferation. The protein is Peroxisomal membrane protein 11-4 (PEX11-4) of Oryza sativa subsp. indica (Rice).